Consider the following 442-residue polypeptide: Serine--tRNA ligase (442 aa).

244–246 (TAE) contacts L-serine. 275–277 (RAE) serves as a coordination point for ATP. Position 298 (Glu-298) interacts with L-serine. Residue 365 to 368 (EISS) participates in ATP binding. Ser-400 serves as a coordination point for L-serine.

This sequence belongs to the class-II aminoacyl-tRNA synthetase family. Type-1 seryl-tRNA synthetase subfamily. As to quaternary structure, homodimer. The tRNA molecule binds across the dimer.

Its subcellular location is the cytoplasm. The enzyme catalyses tRNA(Ser) + L-serine + ATP = L-seryl-tRNA(Ser) + AMP + diphosphate + H(+). It catalyses the reaction tRNA(Sec) + L-serine + ATP = L-seryl-tRNA(Sec) + AMP + diphosphate + H(+). The protein operates within aminoacyl-tRNA biosynthesis; selenocysteinyl-tRNA(Sec) biosynthesis; L-seryl-tRNA(Sec) from L-serine and tRNA(Sec): step 1/1. Its function is as follows. Catalyzes the attachment of serine to tRNA(Ser). Is also able to aminoacylate tRNA(Sec) with serine, to form the misacylated tRNA L-seryl-tRNA(Sec), which will be further converted into selenocysteinyl-tRNA(Sec). In Bradyrhizobium sp. (strain ORS 278), this protein is Serine--tRNA ligase.